We begin with the raw amino-acid sequence, 451 residues long: tRNA(Ile)-lysidine synthase (451 aa).

An ATP-binding site is contributed by 21 to 26 (SGGLDS).

The protein belongs to the tRNA(Ile)-lysidine synthase family.

Its subcellular location is the cytoplasm. The enzyme catalyses cytidine(34) in tRNA(Ile2) + L-lysine + ATP = lysidine(34) in tRNA(Ile2) + AMP + diphosphate + H(+). Its function is as follows. Ligates lysine onto the cytidine present at position 34 of the AUA codon-specific tRNA(Ile) that contains the anticodon CAU, in an ATP-dependent manner. Cytidine is converted to lysidine, thus changing the amino acid specificity of the tRNA from methionine to isoleucine. The chain is tRNA(Ile)-lysidine synthase from Yersinia pseudotuberculosis serotype O:1b (strain IP 31758).